Reading from the N-terminus, the 258-residue chain is Isoprenyl transferase (258 aa).

The active site involves D38. D38 serves as a coordination point for Mg(2+). Residues 39 to 42, W43, R51, H55, and 83 to 85 each bind substrate; these read GNGR and STE. N86 acts as the Proton acceptor in catalysis. Residues W87, R89, R206, and 212 to 214 each bind substrate; that span reads RIS. E225 provides a ligand contact to Mg(2+).

Belongs to the UPP synthase family. As to quaternary structure, homodimer. Mg(2+) is required as a cofactor.

Catalyzes the condensation of isopentenyl diphosphate (IPP) with allylic pyrophosphates generating different type of terpenoids. The polypeptide is Isoprenyl transferase (Bacillus cereus (strain ATCC 10987 / NRS 248)).